Reading from the N-terminus, the 650-residue chain is MQETQDQLEQMKTMISKPAGRKDYSLMQEESVPSTPSGSTVGSLITAVGQNEHNKVRNDEEATSSASPDGTPSTVDEGDVEESNSDISGVNEQNFENELETSLAEGKSWHSAQDLNKSHTEEPIDDPNEDKMSEINLEPSNKGIEKNATVTEKSATILAKELSATTDVKKKCLRAAKPNELPAEEYCNEDLKGAISGLERRTSKPDLETNEIQDAKSLESGIGSSGNVNEVPKQNAKHPMDSCQNLEQSAGTTSAEKEAIRALESQSSGTSQASLAKHKSETNTSIQSSTQETAQAPTVYEELGSEAERSKSHAQAYKNQTDEKEMSGEIIKENPENAIDDASSPSKEYDTPSFAGKPEEGSENLKAPAKDGEPVDSEKKKKNGGTPIEGRPLQSLEGDAPQVPQRPNKRPPPKKPSSKIAAFQAMLKQQQLMDASKTKDKQIDSGNSLLSGKRANITNNLNGIFGLPGMAPGMTPGMVPPQRPPARQQTGSDGGSQSSENQTSSQSAAPSGPQRRARGPKGRKLPAHIANVEKVETSIKTNEIQVLKTWSLKFQKISPTCSEKDSEPLKDIPESGVVSPSNPKSMSELNGVPVESDVICERETDILQNSKNEMNDLEDTNEDNVKEPRQFSIPTHFDLGESDANQEESS.

Composition is skewed to polar residues over residues 1 to 10, 31 to 51, 63 to 74, and 85 to 96; these read MQETQDQLEQ, SVPS…VGQN, TSSASPDGTPST, and SDISGVNEQNFE. Disordered regions lie at residues 1–148, 197–529, and 559–650; these read MQET…EKNA, GLER…PAHI, and PTCS…EESS. Positions 198-217 are enriched in basic and acidic residues; the sequence is LERRTSKPDLETNEIQDAKS. 3 stretches are compositionally biased toward polar residues: residues 242–254, 264–274, and 282–296; these read SCQN…GTTS, ESQSSGTSQAS, and TNTS…TAQA. Composition is skewed to basic and acidic residues over residues 320–335 and 368–379; these read QTDE…KENP and PAKDGEPVDSEK. A compositionally biased stretch (basic residues) spans 407–417; that stretch reads PNKRPPPKKPS. Positions 444–462 are enriched in polar residues; it reads DSGNSLLSGKRANITNNLN. Low complexity predominate over residues 488–507; it reads QQTGSDGGSQSSENQTSSQS. Positions 515–526 are enriched in basic residues; sequence RRARGPKGRKLP. Residues 562-573 show a composition bias toward basic and acidic residues; it reads SEKDSEPLKDIP. Over residues 578–588 the composition is skewed to polar residues; it reads VSPSNPKSMSE. The span at 640–650 shows a compositional bias: acidic residues; it reads GESDANQEESS.

The protein belongs to the AIM21 family.

Its subcellular location is the cytoplasm. The protein resides in the cytoskeleton. It is found in the actin patch. Involved in mitochondrial migration along actin filaments. In Lachancea thermotolerans (strain ATCC 56472 / CBS 6340 / NRRL Y-8284) (Yeast), this protein is Altered inheritance of mitochondria protein 21 (AIM21).